The chain runs to 267 residues: MRVLVNISYQGSQFLGFQIQQHGRTIQQQFEKILKRMHKHEVRIHPSSRTDRGVHAIEQYFHFDTELNIPEQQWQYAMNRALPDDIYVNDVSFVNDDFHCRYDCVGKSYRYKIYQSAHKDPFLCGLKTYVPEQLDIEKMNMAAQHFIGTHDFTGFCSQKTEVESKIRTLYESRIEKTESGFDYIVTGSGFLYNMVRVLIAFLIEVGKGKREPQEVPQLLEARDRNQVPFTAPAEGLYLEKIYLTPNELIQDFGNNIKIHQKKSSQNL.

Residue Asp-51 is the Nucleophile of the active site. Tyr-109 provides a ligand contact to substrate.

The protein belongs to the tRNA pseudouridine synthase TruA family. In terms of assembly, homodimer.

It catalyses the reaction uridine(38/39/40) in tRNA = pseudouridine(38/39/40) in tRNA. Formation of pseudouridine at positions 38, 39 and 40 in the anticodon stem and loop of transfer RNAs. The protein is tRNA pseudouridine synthase A of Staphylococcus saprophyticus subsp. saprophyticus (strain ATCC 15305 / DSM 20229 / NCIMB 8711 / NCTC 7292 / S-41).